A 284-amino-acid chain; its full sequence is tRNA pseudouridine synthase A (284 aa).

The Nucleophile role is filled by Asp62. Tyr120 provides a ligand contact to substrate.

This sequence belongs to the tRNA pseudouridine synthase TruA family. As to quaternary structure, homodimer.

The catalysed reaction is uridine(38/39/40) in tRNA = pseudouridine(38/39/40) in tRNA. In terms of biological role, formation of pseudouridine at positions 38, 39 and 40 in the anticodon stem and loop of transfer RNAs. The sequence is that of tRNA pseudouridine synthase A from Thermosynechococcus vestitus (strain NIES-2133 / IAM M-273 / BP-1).